A 1553-amino-acid polypeptide reads, in one-letter code: Pre-mRNA cleavage complex 2 protein Pcf11 (1553 aa).

N-acetylserine is present on serine 2. Positions 14-142 constitute a CID domain; that stretch reads AREDACRDYQ…ALDVRVNSLD (129 aa). Serine 120 is subject to Phosphoserine. Phosphothreonine is present on threonine 121. Residues 167 to 186 form a disordered region; the sequence is NKSPDEPSTPGTVVSSPSIS. 2 positions are modified to phosphoserine: serine 169 and serine 182. A compositionally biased stretch (low complexity) spans 174 to 186; sequence STPGTVVSSPSIS. Residues 208-235 adopt a coiled-coil conformation; sequence LLAKQKQLLELQQKKLELELEQAKAQLA. The disordered stretch occupies residues 265–648; it reads AVKTPHQVPV…KQQHRLSVDA (384 aa). Lysine 291 is covalently cross-linked (Glycyl lysine isopeptide (Lys-Gly) (interchain with G-Cter in SUMO2)). Residues 308-318 are compositionally biased toward basic and acidic residues; it reads HGKEQSHRKEF. Residues 321–342 are compositionally biased toward polar residues; it reads NTINQSDIKTSKNVPSEKLNSS. A Glycyl lysine isopeptide (Lys-Gly) (interchain with G-Cter in SUMO2) cross-link involves residue lysine 329. 3 stretches are compositionally biased toward basic and acidic residues: residues 343 to 365, 381 to 422, and 428 to 443; these read KQEKSKSGERITKKELDQLDSKS, HTKD…DVKE, and EKKEKDEHMKSSEHRV. Lysine 457 is covalently cross-linked (Glycyl lysine isopeptide (Lys-Gly) (interchain with G-Cter in SUMO2)). Residues 476–487 are compositionally biased toward basic residues; it reads STRKRSRSRSPK. Phosphoserine is present on residues serine 490, serine 495, serine 510, and serine 512. The span at 495–509 shows a compositional bias: basic residues; it reads SPKRRDRRSPKRRQR. 2 stretches are compositionally biased toward basic and acidic residues: residues 530–568 and 600–616; these read SHMEEFPPPSREERNIKRSAKQDVRDPRRLKKMDEDRPQ and SGWEENKSLQQGDEHSK. At serine 645 the chain carries Phosphoserine. Lysine 654 participates in a covalent cross-link: Glycyl lysine isopeptide (Lys-Gly) (interchain with G-Cter in SUMO2). Serine 705 is modified (phosphoserine). The segment at 707–733 is disordered; the sequence is FNDRFPLKRPRYEDSDKPFVDGPASRF. Residues 716–725 show a composition bias toward basic and acidic residues; the sequence is PRYEDSDKPF. Lysine 723 participates in a covalent cross-link: Glycyl lysine isopeptide (Lys-Gly) (interchain with G-Cter in SUMO2). Serine 777 is subject to Phosphoserine. The residue at position 785 (threonine 785) is a Phosphothreonine. Serine 794 is modified (phosphoserine). Residues arginine 805, arginine 820, and arginine 833 each carry the asymmetric dimethylarginine modification. Serine 851 is modified (phosphoserine). A disordered region spans residues 921-940; that stretch reads HGPSGAAIRFDGPHGQPGGG. 8 positions are modified to asymmetric dimethylarginine: arginine 929, arginine 944, arginine 957, arginine 982, arginine 995, arginine 1008, arginine 1092, and arginine 1103. Lysine 1276 is covalently cross-linked (Glycyl lysine isopeptide (Lys-Gly) (interchain with G-Cter in SUMO2)). Residues 1286 to 1313 are disordered; sequence DSATAQVTEAVAQPPPEEDEDQNEDQDV. The span at 1301 to 1313 shows a compositional bias: acidic residues; it reads PEEDEDQNEDQDV. Glycyl lysine isopeptide (Lys-Gly) (interchain with G-Cter in SUMO2) cross-links involve residues lysine 1417, lysine 1509, lysine 1522, and lysine 1544. The segment at 1516 to 1553 is disordered; it reads CESPKVKEEQIDAPPACSEESVATPTEIKTESDTVESV.

Associates with the phosphorylated CTD domain of POLR2A /RNA polymerase II. Phosphorylation at Ser-120 and/or Thr-121 by WNK1 weakens its association with POLR2A/RNA polymerase II, promoting transcript release from the chromatin template and mRNA export to the cytoplasm.

It is found in the nucleus. Functionally, component of pre-mRNA cleavage complex II, which promotes transcription termination by RNA polymerase II. This is Pre-mRNA cleavage complex 2 protein Pcf11 from Mus musculus (Mouse).